A 69-amino-acid chain; its full sequence is Large ribosomal subunit protein uL29 (69 aa).

This sequence belongs to the universal ribosomal protein uL29 family.

The protein is Large ribosomal subunit protein uL29 of Methylobacillus flagellatus (strain ATCC 51484 / DSM 6875 / VKM B-1610 / KT).